The following is a 205-amino-acid chain: Small ribosomal subunit protein uS7 (205 aa).

Belongs to the universal ribosomal protein uS7 family. Part of the 30S ribosomal subunit.

Its function is as follows. One of the primary rRNA binding proteins, it binds directly to 16S rRNA where it nucleates assembly of the head domain of the 30S subunit. Is located at the subunit interface close to the decoding center. This Aeropyrum pernix (strain ATCC 700893 / DSM 11879 / JCM 9820 / NBRC 100138 / K1) protein is Small ribosomal subunit protein uS7.